The chain runs to 238 residues: MKKAKILSGVLLLCFSSPLISQAATLDVRGGYRSGSHAYETRLKVSEGWQNGWWASMESNTWNTIHDNKKENAALNDVQVEVNYAIKLDDQWTVRPGMLTHFSSNGTRYGPYVKLSWDATKDLKFGIRYRYDWKAYRQQDLSGDMSRDNVHRWDGYVTYHINSDFTFAWQTTLYSKQNDYRYANHKKWATENAFVLQYHMTPDITPYIEYDYLDRQGVYNGRDNLSENSYRIGVSFKL.

A signal peptide spans 1–23; sequence MKKAKILSGVLLLCFSSPLISQA. Over 24 to 25 the chain is Periplasmic; sequence AT. Residues 26–32 are membrane-embedded; that stretch reads LDVRGGY. Residues 33–39 lie on the Extracellular side of the membrane; it reads RSGSHAY. Over 40–49 the chain traverses the membrane; the sequence is ETRLKVSEGW. Residues 50-52 are Periplasmic-facing; it reads QNG. Residues 53-61 are membrane-embedded; sequence WWASMESNT. The Extracellular portion of the chain corresponds to 62–76; sequence WNTIHDNKKENAALN. A membrane pass occupies residues 77–86; sequence DVQVEVNYAI. At 87–91 the chain is on the periplasmic side; the sequence is KLDDQ. Residues 92–102 are membrane-embedded; the sequence is WTVRPGMLTHF. Topologically, residues 103–107 are extracellular; that stretch reads SSNGT. A transmembrane span lies at residues 108–117; it reads RYGPYVKLSW. Residues 118-122 are Periplasmic-facing; that stretch reads DATKD. Positions 123-132 form a transmembrane segment; that stretch reads LKFGIRYRYD. Residues 133 to 151 are Extracellular-facing; the sequence is WKAYRQQDLSGDMSRDNVH. The segment at 152-159 is a transmembrane helix; that stretch reads RWDGYVTY. Over 160 to 164 the chain is Periplasmic; that stretch reads HINSD. Positions 165–173 form a transmembrane segment; the sequence is FTFAWQTTL. Over 174 to 190 the chain is Extracellular; sequence YSKQNDYRYANHKKWAT. A membrane pass occupies residues 191 to 200; it reads ENAFVLQYHM. Residues 201–203 are Periplasmic-facing; sequence TPD. The chain crosses the lipid bilayer at residues 204–212; sequence ITPYIEYDY. The Extracellular portion of the chain corresponds to 213–228; the sequence is LDRQGVYNGRDNLSEN. The segment at 229-236 is a transmembrane helix; sequence SYRIGVSF. The Periplasmic portion of the chain corresponds to 237–238; the sequence is KL.

It belongs to the oligogalacturonate-specific porin KdgM (TC 1.B.35) family. NanC subfamily. In terms of assembly, monomer.

The protein localises to the cell outer membrane. The catalysed reaction is N-acetylneuraminate(in) = N-acetylneuraminate(out). Functionally, outer membrane channel protein allowing the entry of N-acetylneuraminic acid (Neu5Ac, the most abundant sialic acid on host cell surfaces) into the bacteria. NanC proteins form high-conductance channels which are open at low membrane potentials and which have a weak anion selectivity. The sequence is that of N-acetylneuraminic acid outer membrane channel protein NanC (nanC) from Escherichia coli O6:H1 (strain CFT073 / ATCC 700928 / UPEC).